The sequence spans 102 residues: UPF0213 protein XAC3202 (102 aa).

The region spanning 5–80 (KPWHLYLLLC…KRLPRARKLA (76 aa)) is the GIY-YIG domain.

The protein belongs to the UPF0213 family.

This is UPF0213 protein XAC3202 from Xanthomonas axonopodis pv. citri (strain 306).